Reading from the N-terminus, the 170-residue chain is NADH-quinone oxidoreductase subunit B (170 aa).

Cysteine 37, cysteine 38, cysteine 102, and cysteine 131 together coordinate [4Fe-4S] cluster.

It belongs to the complex I 20 kDa subunit family. In terms of assembly, NDH-1 is composed of 14 different subunits. Subunits NuoB, C, D, E, F, and G constitute the peripheral sector of the complex. Requires [4Fe-4S] cluster as cofactor.

It is found in the cell inner membrane. It catalyses the reaction a quinone + NADH + 5 H(+)(in) = a quinol + NAD(+) + 4 H(+)(out). In terms of biological role, NDH-1 shuttles electrons from NADH, via FMN and iron-sulfur (Fe-S) centers, to quinones in the respiratory chain. The immediate electron acceptor for the enzyme in this species is believed to be ubiquinone. Couples the redox reaction to proton translocation (for every two electrons transferred, four hydrogen ions are translocated across the cytoplasmic membrane), and thus conserves the redox energy in a proton gradient. This chain is NADH-quinone oxidoreductase subunit B, found in Geotalea uraniireducens (strain Rf4) (Geobacter uraniireducens).